A 217-amino-acid polypeptide reads, in one-letter code: MRLILLGPPGAGKGTQANFIKEKFGIPQISTGDMLRAAVKAGTPLGIEAKKVMDAGGLVSDEIIIGLVKDRLQQDDCKAGYMFDGFPRTIPQADAMKDAGVPIDFVLEIDVPDSEIVERMSGRRAHLASGRTYHVKYNPPKVEGKDDVTGEDLVQRDDDKEETVKKRLDVYHAQTKPLVEYYSSWAASGDAKAPKVRKISGLGAVDEITARAFDALK.

10 to 15 (GAGKGT) is a binding site for ATP. Residues 30-59 (STGDMLRAAVKAGTPLGIEAKKVMDAGGLV) are NMP. AMP-binding positions include T31, R36, 57–59 (GLV), 85–88 (GFPR), and Q92. The LID stretch occupies residues 122–159 (GRRAHLASGRTYHVKYNPPKVEGKDDVTGEDLVQRDDD). ATP contacts are provided by residues R123 and 132 to 133 (TY). The AMP site is built by R156 and R167. G203 lines the ATP pocket.

The protein belongs to the adenylate kinase family. Monomer.

Its subcellular location is the cytoplasm. The catalysed reaction is AMP + ATP = 2 ADP. Its pathway is purine metabolism; AMP biosynthesis via salvage pathway; AMP from ADP: step 1/1. Its function is as follows. Catalyzes the reversible transfer of the terminal phosphate group between ATP and AMP. Plays an important role in cellular energy homeostasis and in adenine nucleotide metabolism. The polypeptide is Adenylate kinase (Azoarcus sp. (strain BH72)).